The primary structure comprises 568 residues: Potassium-transporting ATPase potassium-binding subunit (568 aa).

Helical transmembrane passes span 3-23 (TEIL…YPLG), 64-84 (FLKA…VLLV), 133-153 (FVIM…MAGV), 179-199 (ILLP…TPMG), 255-275 (MVEC…LGFY), 281-301 (LGYS…FINV), 375-395 (FGGV…AVFI), 418-438 (IATF…AISS), 497-517 (IVLI…AGLL), and 535-555 (VTFA…SFFP).

The protein belongs to the KdpA family. In terms of assembly, the system is composed of three essential subunits: KdpA, KdpB and KdpC.

The protein resides in the cell inner membrane. Part of the high-affinity ATP-driven potassium transport (or Kdp) system, which catalyzes the hydrolysis of ATP coupled with the electrogenic transport of potassium into the cytoplasm. This subunit binds the periplasmic potassium ions and delivers the ions to the membrane domain of KdpB through an intramembrane tunnel. The protein is Potassium-transporting ATPase potassium-binding subunit of Bacteroides fragilis (strain ATCC 25285 / DSM 2151 / CCUG 4856 / JCM 11019 / LMG 10263 / NCTC 9343 / Onslow / VPI 2553 / EN-2).